Consider the following 333-residue polypeptide: Probable G-protein coupled receptor 174 (333 aa).

The Extracellular segment spans residues 1–27; the sequence is MPANYTCTRPDGDNTDFRYFIYAVTYT. N-linked (GlcNAc...) asparagine glycosylation is present at Asn4. Residues 28–48 form a helical membrane-spanning segment; the sequence is VILVPGLIGNILALWVFYGYM. The Cytoplasmic portion of the chain corresponds to 49 to 53; sequence KETKR. The chain crosses the membrane as a helical span at residues 54-74; that stretch reads AVIFMINLAIADLLQVLSLPL. Topologically, residues 75 to 91 are extracellular; sequence RIFYYLNHDWPFGPGLC. A disulfide bond links Cys91 and Cys168. A helical transmembrane segment spans residues 92–112; it reads MFCFYLKYVNMYASIYFLVCI. Over 113–134 the chain is Cytoplasmic; it reads SVRRFWFLMYPFRFHDCKQKYD. The helical transmembrane segment at 135–155 threads the bilayer; it reads LYISIAGWLIICLACVLFPLL. At 156-182 the chain is on the extracellular side; sequence RTSDDTSGNRTKCFVDLPTRNVNLAQS. N-linked (GlcNAc...) asparagine glycosylation occurs at Asn164. The chain crosses the membrane as a helical span at residues 183–203; that stretch reads VVMMTIGELIGFVTPLLIVLY. The Cytoplasmic portion of the chain corresponds to 204–231; sequence CTWKTVLSLQDKYPMAQDLGEKQKALKM. Residues 232–252 traverse the membrane as a helical segment; that stretch reads ILTCAGVFLICFAPYHFSFPL. Topologically, residues 253-269 are extracellular; that stretch reads DFLVKSNEIKSCLARRV. The chain crosses the membrane as a helical span at residues 270-290; the sequence is ILIFHSVALCLASLNSCLDPV. Over 291–333 the chain is Cytoplasmic; the sequence is IYYFSTNEFRRRLSRQDLHDSIQLHAKSFVSNHTASTMTPELC.

The protein belongs to the G-protein coupled receptor 1 family. In terms of assembly, interacts with GNA13. Interacts with CCL21.

It is found in the cell membrane. G-protein-coupled receptor of lysophosphatidylserine (LysoPS) that plays different roles in immune response. Plays a negative role in regulatory T-cell accumulation and homeostasis. Under inflammatory conditions where LysoPS production increases, contributes to the down-regulation of regulatory T-cell activity to favor effector response. Mediates the suppression of IL-2 production in activated T-lymphocytes leading to inhibition of growth, proliferation and differentiation of T-cells. Mechanistically, acts via G(s)-containing heterotrimeric G proteins to trigger elevated cyclic AMP levels and protein kinase A/PKA activity, which may in turn act to antagonize proximal TCR signaling. Plays an important role in the initial period of sepsis through the regulation of macrophage polarization and pro- and anti-inflammatory cytokine secretions. Upon testosterone treatment, acts as a receptor for CCL21 and subsequently triggers through G(q)-alpha and G(12)/G(13) proteins a calcium flux leading to chemotactic effects on activated B-cells. Signals via GNA13 and PKA to promote CD86 up-regulation by follicular B-cells. In Homo sapiens (Human), this protein is Probable G-protein coupled receptor 174 (GPR174).